Reading from the N-terminus, the 950-residue chain is Valine--tRNA ligase (950 aa).

The 'HIGH' region signature appears at 40–50; sequence PNVTGSLHMGH. Positions 551–555 match the 'KMSKS' region motif; the sequence is KMSKS. Residue Lys554 coordinates ATP. A coiled-coil region spans residues 881–950; the sequence is LIDKSAELGR…AEQRQKIAAL (70 aa).

It belongs to the class-I aminoacyl-tRNA synthetase family. ValS type 1 subfamily. Monomer.

It localises to the cytoplasm. It carries out the reaction tRNA(Val) + L-valine + ATP = L-valyl-tRNA(Val) + AMP + diphosphate. Catalyzes the attachment of valine to tRNA(Val). As ValRS can inadvertently accommodate and process structurally similar amino acids such as threonine, to avoid such errors, it has a 'posttransfer' editing activity that hydrolyzes mischarged Thr-tRNA(Val) in a tRNA-dependent manner. This Pseudomonas aeruginosa (strain ATCC 15692 / DSM 22644 / CIP 104116 / JCM 14847 / LMG 12228 / 1C / PRS 101 / PAO1) protein is Valine--tRNA ligase.